Here is a 771-residue protein sequence, read N- to C-terminus: Transcription factor TAS2 (771 aa).

The tract at residues 33–53 (RSRAESASGPQQPSRRQPQTS) is disordered. Residues 42–51 (PQQPSRRQPQ) show a composition bias toward low complexity. Residues 54–80 (CDLCRSRKIKCDRGTPCGNCRTRGLAC) constitute a DNA-binding region (zn(2)-C6 fungal-type). The interval 125 to 150 (AVGGSGNAENGAHGDATPRVPLSGLE) is disordered.

It localises to the nucleus. Its function is as follows. Transcription factor; part of the gene cluster that mediates the biosynthesis of the toxin tenuazonic acid (TeA), an inhibitor of protein biosynthesis on ribosomes by suppressing the release of new protein. Directly regulates the expression of the hybrid PKS-NRPS synthetase TAS1 and the subsequent production of TeA. The protein is Transcription factor TAS2 of Pyricularia oryzae (strain 70-15 / ATCC MYA-4617 / FGSC 8958) (Rice blast fungus).